The following is a 335-amino-acid chain: Nucleoid-associated protein YejK (335 aa).

It belongs to the YejK family.

It is found in the cytoplasm. Its subcellular location is the nucleoid. This Shigella boydii serotype 18 (strain CDC 3083-94 / BS512) protein is Nucleoid-associated protein YejK.